The sequence spans 211 residues: Ubiquitin-conjugating enzyme E2 S (211 aa).

Residues 11–157 (HVIRQVYKEV…ARLMTEIHAH (147 aa)) form the UBC core domain. Cys-95 serves as the catalytic Glycyl thioester intermediate. Residues 157 to 167 (HSSSLRGKDPT) show a composition bias toward basic and acidic residues. The disordered stretch occupies residues 157-211 (HSSSLRGKDPTDPCSSASVTGALGDGPMAKKHAGDRDKKLAAKKKTDKKRALRRL). A compositionally biased stretch (basic residues) spans 197–211 (AAKKKTDKKRALRRL).

This sequence belongs to the ubiquitin-conjugating enzyme family.

It carries out the reaction S-ubiquitinyl-[E1 ubiquitin-activating enzyme]-L-cysteine + [E2 ubiquitin-conjugating enzyme]-L-cysteine = [E1 ubiquitin-activating enzyme]-L-cysteine + S-ubiquitinyl-[E2 ubiquitin-conjugating enzyme]-L-cysteine.. The protein operates within protein modification; protein ubiquitination. Catalyzes the covalent attachment of ubiquitin to other proteins. Acts as an essential factor of the anaphase promoting complex/cyclosome (APC/C), a cell cycle-regulated ubiquitin ligase that controls progression through mitosis. Acts by specifically elongating 'Lys-11'-linked polyubiquitin chains initiated by the E2 enzyme ube2c/ubch10 on APC/C substrates, enhancing the degradation of APC/C substrates by the proteasome and promoting mitotic exit. This is Ubiquitin-conjugating enzyme E2 S (ube2s) from Aquarana catesbeiana (American bullfrog).